Reading from the N-terminus, the 346-residue chain is E3 ubiquitin-protein ligase MARCHF9 (346 aa).

Disordered regions lie at residues 20–39 (GGGR…GGCG) and 47–92 (STRD…PGAL). Basic and acidic residues predominate over residues 63–75 (PRARGLAGDKEPR). A compositionally biased stretch (pro residues) spans 77-90 (GPLPPPAPPLPPPG). The RING-CH-type zinc-finger motif lies at 102–162 (DSGLRTPQCR…ELCYFKYQVL (61 aa)). Zn(2+) contacts are provided by C110, C113, C126, C128, H136, C139, C152, and C155. 2 consecutive transmembrane segments (helical) span residues 185-205 (IAAI…LIWS) and 219-239 (LFQI…GLII). Disordered regions lie at residues 273–301 (DAGG…RPPA) and 326–346 (PPDA…VTTV). The span at 284-296 (PRNSRTGPTSGAT) shows a compositional bias: polar residues.

As to quaternary structure, homodimer. As to expression, ubiquitously expressed.

It is found in the golgi apparatus membrane. The protein localises to the lysosome membrane. It catalyses the reaction S-ubiquitinyl-[E2 ubiquitin-conjugating enzyme]-L-cysteine + [acceptor protein]-L-lysine = [E2 ubiquitin-conjugating enzyme]-L-cysteine + N(6)-ubiquitinyl-[acceptor protein]-L-lysine.. Its pathway is protein modification; protein ubiquitination. In terms of biological role, E3 ubiquitin-protein ligase that may mediate ubiquitination of MHC-I, CD4 and ICAM1, and promote their subsequent endocytosis and sorting to lysosomes via multivesicular bodies. E3 ubiquitin ligases accept ubiquitin from an E2 ubiquitin-conjugating enzyme in the form of a thioester and then directly transfer the ubiquitin to targeted substrates. The chain is E3 ubiquitin-protein ligase MARCHF9 from Homo sapiens (Human).